Reading from the N-terminus, the 416-residue chain is Phosphoglycerate kinase (416 aa).

13 residues coordinate (2R)-3-phosphoglycerate: V23, D24, F25, N26, R39, S62, H63, G65, R66, L121, R122, H169, and R170. Position 213 (G213) interacts with ADP. Position 213 (G213) interacts with CDP. 2 residues coordinate AMP: A214 and K215. Residue A214 participates in ATP binding. Mg(2+) is bound at residue A214. Residue D218 coordinates CDP. D218 is a Mg(2+) binding site. Residue K219 coordinates AMP. K219 contacts ATP. An ADP-binding site is contributed by G237. G237 serves as a coordination point for CDP. AMP-binding residues include G238 and G312. ATP-binding residues include G238 and G312. CDP contacts are provided by G337 and F342. F342 contacts ADP. Position 343 (E343) interacts with AMP. ATP is bound by residues E343, D374, and T375. D374 is a Mg(2+) binding site.

Belongs to the phosphoglycerate kinase family. As to quaternary structure, monomer. The cofactor is Mg(2+).

The protein localises to the cytoplasm. It localises to the mitochondrion. It carries out the reaction (2R)-3-phosphoglycerate + ATP = (2R)-3-phospho-glyceroyl phosphate + ADP. It participates in carbohydrate degradation; glycolysis; pyruvate from D-glyceraldehyde 3-phosphate: step 2/5. Catalyzes one of the two ATP producing reactions in the glycolytic pathway via the reversible conversion of 1,3-diphosphoglycerate to 3-phosphoglycerate. Both L- and D- forms of purine and pyrimidine nucleotides can be used as substrates, but the activity is much lower on pyrimidines. Negatively regulates the biosynthesis of acetyl-CoA from pyruvate in the mitochondrion. The chain is Phosphoglycerate kinase (pgkA) from Agaricus bisporus (White button mushroom).